Consider the following 272-residue polypeptide: Aquaporin FA-CHIP (272 aa).

Residues methionine 1–glutamate 17 lie on the Cytoplasmic side of the membrane. A helical membrane pass occupies residues phenylalanine 18–phenylalanine 35. Over asparagine 36–aspartate 52 the chain is Extracellular. Residue asparagine 44 is glycosylated (N-linked (GlcNAc...) asparagine). Residues isoleucine 53 to valine 71 traverse the membrane as a helical segment. At glycine 72 to lysine 97 the chain is on the cytoplasmic side. An NPA 1 motif is present at residues asparagine 80 to alanine 82. The helical transmembrane segment at alanine 98–isoleucine 119 threads the bilayer. At threonine 120–alanine 139 the chain is on the extracellular side. The N-linked (GlcNAc...) asparagine glycan is linked to asparagine 125. Residues glycine 140–valine 160 form a helical membrane-spanning segment. Residues threonine 161–valine 168 are Cytoplasmic-facing. Residues serine 169–isoleucine 188 traverse the membrane as a helical segment. Over aspartate 189–tryptophan 214 the chain is Extracellular. Positions asparagine 196 to alanine 198 match the NPA 2 motif. N-linked (GlcNAc...) asparagine glycosylation is present at asparagine 209. The helical transmembrane segment at isoleucine 215–alanine 236 threads the bilayer. At proline 237–lysine 272 the chain is on the cytoplasmic side.

It belongs to the MIP/aquaporin (TC 1.A.8) family.

The protein localises to the membrane. Its function is as follows. Forms a water-specific channel. The polypeptide is Aquaporin FA-CHIP (AQPA) (Pelophylax lessonae (Pool frog)).